The chain runs to 53 residues: UPF0391 membrane protein Bxeno_A2958 (53 aa).

2 helical membrane passes run 5 to 25 (AIVF…GIAA) and 30 to 50 (IAKI…LLGV).

This sequence belongs to the UPF0391 family.

Its subcellular location is the cell membrane. The polypeptide is UPF0391 membrane protein Bxeno_A2958 (Paraburkholderia xenovorans (strain LB400)).